The following is a 243-amino-acid chain: Terpene cyclase dpasB (243 aa).

Transmembrane regions (helical) follow at residues 16–36 (VVWV…SNYI), 50–70 (MALM…FIYP), 79–99 (IHTL…RYGA), 112–132 (LPVI…AFAE), 141–161 (AVSG…QLLC), 172–189 (LWLA…PNML), and 207–227 (IWFL…LWYV).

The protein belongs to the paxB family.

Its subcellular location is the membrane. The protein operates within secondary metabolite biosynthesis; terpenoid biosynthesis. Its function is as follows. Terpene cyclase; part of the gene cluster that mediates the biosynthesis of the diterpenoid pyrones subglutinols A and B. The first step of the pathway is the synthesis of the alpha-pyrone moiety by the polyketide synthase dpasA via condensation of one acetyl-CoA starter unit with 3 malonyl-CoA units and 2 methylations. The alpha-pyrone is then combined with geranylgeranyl pyrophosphate (GGPP) formed by the GGPP synthase dpasD through the action of the prenyltransferase dpasC to yield a linear alpha-pyrone diterpenoid. Subsequent steps in the diterpenoid pyrone biosynthetic pathway involve the decalin core formation, which is initiated by the epoxidation of the C10-C11 olefin by the FAD-dependent oxidoreductase dpasE, and is followed by a cyclization cascade catalyzed by the terpene cyclase dpasB. The FAD-linked oxidoreductase dpasF is then involved in tetrahydrofuran (THF) ring formation at the C5 unit to complete the formation of subglutinols A and B. DpasF possesses also an additional catalytic ability of multi-step oxidations to generate a new DDP analog with an enone system at the C5 named FDDP A. This chain is Terpene cyclase dpasB, found in Apiospora sacchari (Arthrinium sacchari).